Reading from the N-terminus, the 95-residue chain is RING finger protein Z (95 aa).

The span at 1-16 (MGNSKSKSNPSSSSES) shows a compositional bias: low complexity. The disordered stretch occupies residues 1 to 23 (MGNSKSKSNPSSSSESQKGAPTV). A lipid anchor (N-myristoyl glycine; by host) is attached at G2. Residues 40–76 (CKCCWFADKNLIKCSDHYLCLRCLNVMLKNSDLCNIC) form an RING-type; atypical zinc finger. A PTAP/PSAP motif motif is present at residues 90–93 (PSAP).

Belongs to the arenaviridae Z protein family. As to quaternary structure, interacts with protein NP; this interaction probably directs the encapsidated genome to budding sites. Interacts (via RING domain) with polymerase L; this interaction inhibits viral transcription and replication, Z partially blocks the product exit tunnel for the releasing nascent RNA product. Interacts with the glycoprotein complex; this interaction plays a role in virion budding. Interacts with host eIF4E; this interaction results in eIF4E reduced affinity for its substrate, the 5'-m7 G cap structure. Interacts (via late-budding domain) with host TSG101; this interaction is essential for budding and release of viral particles. Interacts with host RPLP0; this interaction may serve to load ribosome-like particles inside the virion. Interacts with host PML; this interaction induces PML bodies redistribution in the cytoplasm upon viral infection. In terms of processing, myristoylation is required for the role of RING finger protein Z in assembly and budding.

The protein resides in the virion. The protein localises to the host cytoplasm. Its subcellular location is the host perinuclear region. It is found in the host cell membrane. In terms of biological role, plays a crucial role in virion assembly and budding. Expressed late in the virus life cycle, it acts as an inhibitor of viral transcription and RNA synthesis by interacting with the viral polymerase L. Presumably recruits the NP encapsidated genome to cellular membranes at budding sites via direct interaction with NP. Plays critical roles in the final steps of viral release by interacting with host TSG101, a member of the vacuolar protein-sorting pathway and using other cellular host proteins involved in vesicle formation pathway. The budding of the virus progeny occurs after association of protein Z with the viral glycoprotein complex SSP-GP1-GP2 at the cell periphery, step that requires myristoylation of protein Z. Also selectively represses protein production by associating with host eIF4E. In cell-based minigenome assay, has an inhibitory effect on the ribonucleoprotein machinery (vRNP), which is responsible for the replication and transcription of the viral genome. This chain is RING finger protein Z, found in Guanarito mammarenavirus (isolate Human/Venezuela/NH-95551/1990) (GTOV).